Here is a 443-residue protein sequence, read N- to C-terminus: Histidine--tRNA ligase (443 aa).

Over residues 1–20 (MTESEKKQQKPQKAKAEKFK) the composition is skewed to basic and acidic residues. A disordered region spans residues 1–21 (MTESEKKQQKPQKAKAEKFKA).

This sequence belongs to the class-II aminoacyl-tRNA synthetase family. Homodimer.

It is found in the cytoplasm. The enzyme catalyses tRNA(His) + L-histidine + ATP = L-histidyl-tRNA(His) + AMP + diphosphate + H(+). The protein is Histidine--tRNA ligase of Corynebacterium jeikeium (strain K411).